We begin with the raw amino-acid sequence, 279 residues long: Sulfur carrier protein FdhD (279 aa).

Residue C112 is the Cysteine persulfide intermediate of the active site.

It belongs to the FdhD family.

The protein resides in the cytoplasm. In terms of biological role, required for formate dehydrogenase (FDH) activity. Acts as a sulfur carrier protein that transfers sulfur from IscS to the molybdenum cofactor prior to its insertion into FDH. The protein is Sulfur carrier protein FdhD of Nocardia farcinica (strain IFM 10152).